The chain runs to 129 residues: Cytochrome c3 (129 aa).

Positions 1–22 are cleaved as a signal peptide; that stretch reads MRKLFFCGVLALAVAFALPVVA. Heme c is bound by residues His44, His47, Cys52, Cys55, His56, His57, Cys68, Cys73, His74, His92, Cys101, Cys104, His105, Cys122, Cys127, and His128.

Post-translationally, binds 4 heme c groups per subunit.

It is found in the periplasm. In terms of biological role, participates in sulfate respiration coupled with phosphorylation by transferring electrons from the enzyme dehydrogenase to ferredoxin. The protein is Cytochrome c3 of Nitratidesulfovibrio vulgaris (strain ATCC 29579 / DSM 644 / CCUG 34227 / NCIMB 8303 / VKM B-1760 / Hildenborough) (Desulfovibrio vulgaris).